The sequence spans 250 residues: 4-hydroxy-tetrahydrodipicolinate reductase (250 aa).

NAD(+) contacts are provided by residues 9-14, 79-81, and 103-106; these read GATGKM, GTT, and SANM. His-135 acts as the Proton donor/acceptor in catalysis. His-136 is a binding site for (S)-2,3,4,5-tetrahydrodipicolinate. The active-site Proton donor is the Lys-139. 145 to 146 provides a ligand contact to (S)-2,3,4,5-tetrahydrodipicolinate; that stretch reads GT.

The protein belongs to the DapB family.

It is found in the cytoplasm. It carries out the reaction (S)-2,3,4,5-tetrahydrodipicolinate + NAD(+) + H2O = (2S,4S)-4-hydroxy-2,3,4,5-tetrahydrodipicolinate + NADH + H(+). It catalyses the reaction (S)-2,3,4,5-tetrahydrodipicolinate + NADP(+) + H2O = (2S,4S)-4-hydroxy-2,3,4,5-tetrahydrodipicolinate + NADPH + H(+). It participates in amino-acid biosynthesis; L-lysine biosynthesis via DAP pathway; (S)-tetrahydrodipicolinate from L-aspartate: step 4/4. In terms of biological role, catalyzes the conversion of 4-hydroxy-tetrahydrodipicolinate (HTPA) to tetrahydrodipicolinate. The polypeptide is 4-hydroxy-tetrahydrodipicolinate reductase (Rickettsia bellii (strain OSU 85-389)).